The sequence spans 151 residues: Probable ubiquitin-conjugating enzyme E2 W-A (151 aa).

The 149-residue stretch at 3–151 (SMQKRLQKEL…TKWWYHDDTC (149 aa)) folds into the UBC core domain. The active-site Glycyl thioester intermediate is C91.

This sequence belongs to the ubiquitin-conjugating enzyme family.

It is found in the nucleus. The catalysed reaction is S-ubiquitinyl-[E1 ubiquitin-activating enzyme]-L-cysteine + [E2 ubiquitin-conjugating enzyme]-L-cysteine = [E1 ubiquitin-activating enzyme]-L-cysteine + S-ubiquitinyl-[E2 ubiquitin-conjugating enzyme]-L-cysteine.. It catalyses the reaction S-ubiquitinyl-[E1 ubiquitin-activating enzyme]-L-cysteine + [acceptor protein]-N-terminal-amino acid = [E1 ubiquitin-activating enzyme]-L-cysteine + N-terminal-ubiquitinyl-[acceptor protein].. It functions in the pathway protein modification; protein ubiquitination. In terms of biological role, accepts ubiquitin from the E1 complex and catalyzes its covalent attachment to other proteins. Catalyzes monoubiquitination. Involved in degradation of misfolded chaperone substrate and DNA repair. This is Probable ubiquitin-conjugating enzyme E2 W-A (ube2wa) from Danio rerio (Zebrafish).